Here is a 339-residue protein sequence, read N- to C-terminus: Phosphate acyltransferase (339 aa).

This sequence belongs to the PlsX family. As to quaternary structure, homodimer. Probably interacts with PlsY.

It localises to the cytoplasm. It catalyses the reaction a fatty acyl-[ACP] + phosphate = an acyl phosphate + holo-[ACP]. It participates in lipid metabolism; phospholipid metabolism. Functionally, catalyzes the reversible formation of acyl-phosphate (acyl-PO(4)) from acyl-[acyl-carrier-protein] (acyl-ACP). This enzyme utilizes acyl-ACP as fatty acyl donor, but not acyl-CoA. This Moorella thermoacetica (strain ATCC 39073 / JCM 9320) protein is Phosphate acyltransferase.